Consider the following 533-residue polypeptide: Flavin-containing monooxygenase 5 (533 aa).

Arg-5 bears the Dimethylated arginine mark. Residues 10 to 14 (GSGAS), Glu-33, and 41 to 42 (LW) each bind FAD. Position 54 is a phosphoserine (Ser-54). Tyr-56 carries the phosphotyrosine modification. Ser-58 is modified (phosphoserine). 62-63 (NT) contacts FAD. 196-199 (SGGD) provides a ligand contact to NADP(+). A Phosphothreonine modification is found at Thr-284. Ser-401 carries the phosphoserine modification. Residues 513–533 (LVTVRVLMLAVTFLAVILAYF) form a helical membrane-spanning segment.

Belongs to the FMO family. FAD is required as a cofactor.

Its subcellular location is the microsome membrane. It is found in the endoplasmic reticulum membrane. The enzyme catalyses N,N-dimethylaniline + NADPH + O2 + H(+) = N,N-dimethylaniline N-oxide + NADP(+) + H2O. It catalyses the reaction NADPH + O2 + H(+) = H2O2 + NADP(+). The catalysed reaction is heptan-2-one + NADPH + O2 + H(+) = pentyl acetate + NADP(+) + H2O. It carries out the reaction octan-3-one + NADPH + O2 + H(+) = pentyl propanoate + NADP(+) + H2O. The enzyme catalyses octan-3-one + NADPH + O2 + H(+) = ethyl hexanoate + NADP(+) + H2O. It catalyses the reaction hexan-3-one + NADPH + O2 + H(+) = ethyl butanoate + NADP(+) + H2O. The catalysed reaction is hexan-3-one + NADPH + O2 + H(+) = propyl propanoate + NADP(+) + H2O. It carries out the reaction heptan-4-one + NADPH + O2 + H(+) = propyl butanoate + NADP(+) + H2O. The enzyme catalyses (2E)-geranial + NADPH + O2 + H(+) = (1E)-2,6-dimethylhepta-1,5-dien-1-yl formate + NADP(+) + H2O. It catalyses the reaction sulcatone + NADPH + O2 + H(+) = 4-methylpent-3-en-1-yl acetate + NADP(+) + H2O. Functionally, acts as a Baeyer-Villiger monooxygenase on a broad range of substrates. Catalyzes the insertion of an oxygen atom into a carbon-carbon bond adjacent to a carbonyl, which converts ketones to esters. Active on diverse carbonyl compounds, whereas soft nucleophiles are mostly non- or poorly reactive. In contrast with other forms of FMO it is non- or poorly active on 'classical' substrates such as drugs, pesticides, and dietary components containing soft nucleophilic heteroatoms. Able to oxidize drug molecules bearing a carbonyl group on an aliphatic chain, such as nabumetone and pentoxifylline. Also, in the absence of substrates, shows slow but yet significant NADPH oxidase activity. Acts as a positive modulator of cholesterol biosynthesis as well as glucose homeostasis, promoting metabolic aging via pleiotropic effects. The polypeptide is Flavin-containing monooxygenase 5 (Rattus norvegicus (Rat)).